The chain runs to 425 residues: MTATSPRLKHEVKDLALAPLGRQRIEWAGREMPVLRQIRDRFAQEKPFAGLRLVACAHITTETAHLAIALKAGGADAVLIASNPLSTQDDVAASLVLDHEIPVFAQKGEDNATYNRHVQIALDHRPNIIIDDGSDVVATLVQERQHQIADLIGTTEETTTGIVRLRAMFKDGVLTFPAVNVNDADTKHFFDNRYGTGQSTLDGIIRATNILLAGKNVVVVGYGWCGKGTALRARGMGANVIVTEIDPIKAIEAVMDGFRVLPMAEAAPQGDIFITVTGNKHVVRGEHFDVMKDGAIVCNSGHFDLELDLKYLAANAKEIKEVRPFTEEYKLTNGKSVVVLGQGRLINLAAAEGHPSAVMDMSFANQALACEYLVKNKGKLAPGLHSIPVEVDQEIARLKLQAMGIYIDSLTPEQIEYINSWTSGT.

Positions 60, 132, and 157 each coordinate substrate. 158 to 160 is a binding site for NAD(+); it reads TTT. The substrate site is built by K187 and D191. Residues N192, 221-226, E244, N279, 300-302, and N347 contribute to the NAD(+) site; these read GYGWCG and SGH.

The protein belongs to the adenosylhomocysteinase family. NAD(+) serves as cofactor.

Its subcellular location is the cytoplasm. The enzyme catalyses S-adenosyl-L-homocysteine + H2O = L-homocysteine + adenosine. The protein operates within amino-acid biosynthesis; L-homocysteine biosynthesis; L-homocysteine from S-adenosyl-L-homocysteine: step 1/1. May play a key role in the regulation of the intracellular concentration of adenosylhomocysteine. The protein is Adenosylhomocysteinase of Nostoc sp. (strain PCC 7120 / SAG 25.82 / UTEX 2576).